Reading from the N-terminus, the 394-residue chain is Cystathionine gamma-lyase (394 aa).

The tract at residues 37–56 (KQSSPANPIGTYEYSRSQNP) is disordered. Arg-52, Tyr-104, and Arg-109 together coordinate substrate. The residue at position 204 (Lys-204) is an N6-(pyridoxal phosphate)lysine. Residue Glu-334 participates in substrate binding. At Ser-362 the chain carries Phosphoserine.

This sequence belongs to the trans-sulfuration enzymes family. In terms of assembly, homotetramer. It depends on pyridoxal 5'-phosphate as a cofactor.

Its subcellular location is the cytoplasm. The enzyme catalyses L,L-cystathionine + H2O = 2-oxobutanoate + L-cysteine + NH4(+). Its pathway is amino-acid biosynthesis; L-cysteine biosynthesis; L-cysteine from L-homocysteine and L-serine: step 2/2. Catalyzes the production of cysteine from cystathionine in the reverse transsulfuration pathway for the biosynthesis of sulfur-containing amino acids cysteine and methionine. In this pathway, homocysteine sulfur is converted to cysteine sulfur. Also has cystathionine beta-lyase and cystathionine gamma-synthase activities in vitro. Cystathionine beta-lyase may be physiological, while cystathionine gamma-synthase activity is not, as the required substrate O-succinyl-L-homoserine(OSH) does not occur naturally in S.cerevisiae. This Saccharomyces cerevisiae (strain ATCC 204508 / S288c) (Baker's yeast) protein is Cystathionine gamma-lyase.